The primary structure comprises 97 residues: YcgL domain-containing protein Pmen_1774 (97 aa).

The region spanning arginine 3 to proline 87 is the YcgL domain.

This chain is YcgL domain-containing protein Pmen_1774, found in Ectopseudomonas mendocina (strain ymp) (Pseudomonas mendocina).